Here is a 158-residue protein sequence, read N- to C-terminus: NADH-quinone oxidoreductase subunit B 1 (158 aa).

[4Fe-4S] cluster is bound by residues Cys37, Cys38, Cys102, and Cys132.

It belongs to the complex I 20 kDa subunit family. NDH-1 is composed of 14 different subunits. Subunits NuoB, C, D, E, F, and G constitute the peripheral sector of the complex. The cofactor is [4Fe-4S] cluster.

Its subcellular location is the cell inner membrane. It catalyses the reaction a quinone + NADH + 5 H(+)(in) = a quinol + NAD(+) + 4 H(+)(out). Functionally, NDH-1 shuttles electrons from NADH, via FMN and iron-sulfur (Fe-S) centers, to quinones in the respiratory chain. Couples the redox reaction to proton translocation (for every two electrons transferred, four hydrogen ions are translocated across the cytoplasmic membrane), and thus conserves the redox energy in a proton gradient. This is NADH-quinone oxidoreductase subunit B 1 from Azoarcus sp. (strain BH72).